Consider the following 2710-residue polypeptide: Serine/threonine-protein kinase ATR (2710 aa).

The region spanning 1647 to 2257 is the FAT domain; the sequence is TLAKASFRCQ…LWMMAAVSKS (611 aa). Positions 2368–2680 constitute a PI3K/PI4K catalytic domain; that stretch reads IADDAEILNS…GVNAAPSLPL (313 aa). The interval 2374-2380 is G-loop; sequence ILNSLQK. A catalytic loop region spans residues 2545–2553; sequence GLGDRHGEN. The interval 2565-2589 is activation loop; sequence HVDFSCLFDKGLLLEKPEVVPFRFT. In terms of domain architecture, FATC spans 2678–2710; it reads LPLSVEGQARRLIAEAVSHSNLGKMYVWWMAWF.

This sequence belongs to the PI3/PI4-kinase family. ATM subfamily.

It localises to the nucleus. It catalyses the reaction L-seryl-[protein] + ATP = O-phospho-L-seryl-[protein] + ADP + H(+). The enzyme catalyses L-threonyl-[protein] + ATP = O-phospho-L-threonyl-[protein] + ADP + H(+). In terms of biological role, probable serine/threonine kinase. Seems to play a central role in cell-cycle regulation by transmitting DNA damage signals to downstream effectors of cell-cycle progression. May recognize the substrate consensus sequence [ST]-Q and phosphorylate histone variant H2AX to form H2AXS139ph at sites of DNA damage, thereby regulating DNA damage response mechanism. The protein is Serine/threonine-protein kinase ATR of Oryza sativa subsp. japonica (Rice).